The following is a 675-amino-acid chain: Heat shock 70 kDa protein 12A (675 aa).

Residues 1–45 (MADKEAGGGDAGPRETAPTSTYSSPARSLGDTGITPLSPSHILND) form a disordered region. Position 2 is an N-acetylalanine (A2). Residues 17–26 (APTSTYSSPA) are compositionally biased toward polar residues.

This sequence belongs to the heat shock protein 70 family. As to quaternary structure, interacts with SORL1 (via cytosolic C-terminus); this interaction affects SORL1 internalization and subcellular localization. In terms of tissue distribution, expressed most strongly in brain, kidney and heart with little or no expression in other tissues. In the brain, expressed in glial cells, including astrocytes (at protein level). In the aorta, preferentially expressed in lesions.

It is found in the cytoplasm. The protein resides in the nucleus. Its function is as follows. Adapter protein for SORL1, but not SORT1. Delays SORL1 internalization and affects SORL1 subcellular localization. This Mus musculus (Mouse) protein is Heat shock 70 kDa protein 12A (Hspa12a).